We begin with the raw amino-acid sequence, 275 residues long: Hydroxyethylthiazole kinase (275 aa).

Met50 provides a ligand contact to substrate. Residues Arg126 and Ser171 each coordinate ATP. Residue Ala200 participates in substrate binding.

This sequence belongs to the Thz kinase family. It depends on Mg(2+) as a cofactor.

The enzyme catalyses 5-(2-hydroxyethyl)-4-methylthiazole + ATP = 4-methyl-5-(2-phosphooxyethyl)-thiazole + ADP + H(+). It functions in the pathway cofactor biosynthesis; thiamine diphosphate biosynthesis; 4-methyl-5-(2-phosphoethyl)-thiazole from 5-(2-hydroxyethyl)-4-methylthiazole: step 1/1. In terms of biological role, catalyzes the phosphorylation of the hydroxyl group of 4-methyl-5-beta-hydroxyethylthiazole (THZ). In Acinetobacter baumannii (strain ATCC 17978 / DSM 105126 / CIP 53.77 / LMG 1025 / NCDC KC755 / 5377), this protein is Hydroxyethylthiazole kinase.